We begin with the raw amino-acid sequence, 151 residues long: Small ribosomal subunit protein uS15 (151 aa).

The segment covering 1–11 has biased composition (basic residues); the sequence is MPHRSRHKKGR. The segment at 1 to 24 is disordered; sequence MPHRSRHKKGRSSSVRPPHPTVPT.

Belongs to the universal ribosomal protein uS15 family. Part of the 30S ribosomal subunit.

The sequence is that of Small ribosomal subunit protein uS15 from Pyrobaculum calidifontis (strain DSM 21063 / JCM 11548 / VA1).